Consider the following 41-residue polypeptide: Large ribosomal subunit protein bL36 (41 aa).

Belongs to the bacterial ribosomal protein bL36 family.

The polypeptide is Large ribosomal subunit protein bL36 (Methylorubrum extorquens (strain CM4 / NCIMB 13688) (Methylobacterium extorquens)).